Here is a 475-residue protein sequence, read N- to C-terminus: Cysteine--tRNA ligase (475 aa).

Cys28 is a binding site for Zn(2+). A 'HIGH' region motif is present at residues 30-40 (PTVYDYAHIGN). Residues Cys213, His238, and Glu242 each coordinate Zn(2+). Residues 270–274 (KMSKS) carry the 'KMSKS' region motif. Lys273 is a binding site for ATP.

Belongs to the class-I aminoacyl-tRNA synthetase family. In terms of assembly, monomer. Zn(2+) is required as a cofactor.

The protein resides in the cytoplasm. The catalysed reaction is tRNA(Cys) + L-cysteine + ATP = L-cysteinyl-tRNA(Cys) + AMP + diphosphate. In Chlamydia muridarum (strain MoPn / Nigg), this protein is Cysteine--tRNA ligase (cysS).